A 274-amino-acid chain; its full sequence is MNSKNYHQKKRFGQHWLVNKKILEKIKEIAVLNENDFILEIGPGKGALTSKLLNSEIKKLHAIELDKDLINLLNDKFNNNDKFSLQQGDILSVNLDSINKKITKVIANIPYNITGPILDIFIGRLGIIRKYNYEKIIFLMQKDVVDRILSKEGSPNAGALSIRMQLLSKIKRICDVPPSSFSPPPKVFSSLVVFEPIKNDLRLDISLEKYIDKLLRISFNSRRKMLRNTLNTILSNEEINELSESSKVCFNLRPQDISIDQWIKLAENCIKIKK.

S-adenosyl-L-methionine contacts are provided by His-15, Leu-17, Gly-42, Glu-64, Asp-89, and Asn-108.

The protein belongs to the class I-like SAM-binding methyltransferase superfamily. rRNA adenine N(6)-methyltransferase family. RsmA subfamily.

The protein localises to the cytoplasm. It catalyses the reaction adenosine(1518)/adenosine(1519) in 16S rRNA + 4 S-adenosyl-L-methionine = N(6)-dimethyladenosine(1518)/N(6)-dimethyladenosine(1519) in 16S rRNA + 4 S-adenosyl-L-homocysteine + 4 H(+). Its function is as follows. Specifically dimethylates two adjacent adenosines (A1518 and A1519) in the loop of a conserved hairpin near the 3'-end of 16S rRNA in the 30S particle. May play a critical role in biogenesis of 30S subunits. This is Ribosomal RNA small subunit methyltransferase A from Prochlorococcus marinus (strain MIT 9301).